Consider the following 189-residue polypeptide: ATP synthase subunit delta (189 aa).

It belongs to the ATPase delta chain family. As to quaternary structure, F-type ATPases have 2 components, F(1) - the catalytic core - and F(0) - the membrane proton channel. F(1) has five subunits: alpha(3), beta(3), gamma(1), delta(1), epsilon(1). F(0) has three main subunits: a(1), b(2) and c(10-14). The alpha and beta chains form an alternating ring which encloses part of the gamma chain. F(1) is attached to F(0) by a central stalk formed by the gamma and epsilon chains, while a peripheral stalk is formed by the delta and b chains.

It is found in the cell inner membrane. Functionally, f(1)F(0) ATP synthase produces ATP from ADP in the presence of a proton or sodium gradient. F-type ATPases consist of two structural domains, F(1) containing the extramembraneous catalytic core and F(0) containing the membrane proton channel, linked together by a central stalk and a peripheral stalk. During catalysis, ATP synthesis in the catalytic domain of F(1) is coupled via a rotary mechanism of the central stalk subunits to proton translocation. Its function is as follows. This protein is part of the stalk that links CF(0) to CF(1). It either transmits conformational changes from CF(0) to CF(1) or is implicated in proton conduction. This is ATP synthase subunit delta from Methylorubrum extorquens (strain PA1) (Methylobacterium extorquens).